A 398-amino-acid polypeptide reads, in one-letter code: Acetate kinase (398 aa).

Asn-10 is a Mg(2+) binding site. Lys-17 provides a ligand contact to ATP. Arg-91 contacts substrate. Asp-148 acts as the Proton donor/acceptor in catalysis. ATP is bound by residues 208–212 (HLGNG), 283–285 (DCR), and 331–335 (GIGEN). Glu-385 provides a ligand contact to Mg(2+).

The protein belongs to the acetokinase family. Homodimer. Mg(2+) serves as cofactor. The cofactor is Mn(2+).

It localises to the cytoplasm. The enzyme catalyses acetate + ATP = acetyl phosphate + ADP. It participates in metabolic intermediate biosynthesis; acetyl-CoA biosynthesis; acetyl-CoA from acetate: step 1/2. Functionally, catalyzes the formation of acetyl phosphate from acetate and ATP. Can also catalyze the reverse reaction. In Shewanella pealeana (strain ATCC 700345 / ANG-SQ1), this protein is Acetate kinase.